The sequence spans 111 residues: Large ribosomal subunit protein uL24 (111 aa).

The tract at residues 43 to 62 is disordered; that stretch reads TRHKKKDQTTKRAAKQSTGK.

The protein belongs to the universal ribosomal protein uL24 family. As to quaternary structure, part of the 50S ribosomal subunit.

One of two assembly initiator proteins, it binds directly to the 5'-end of the 23S rRNA, where it nucleates assembly of the 50S subunit. In terms of biological role, one of the proteins that surrounds the polypeptide exit tunnel on the outside of the subunit. In Mycoplasma pneumoniae (strain ATCC 29342 / M129 / Subtype 1) (Mycoplasmoides pneumoniae), this protein is Large ribosomal subunit protein uL24.